We begin with the raw amino-acid sequence, 465 residues long: Ribulose bisphosphate carboxylase large chain (465 aa).

Residue K4 is modified to N6,N6,N6-trimethyllysine. Residues N113 and T163 each contribute to the substrate site. Catalysis depends on K165, which acts as the Proton acceptor. K167 is a binding site for substrate. Mg(2+) is bound by residues K191, D193, and E194. N6-carboxylysine is present on K191. Residue H284 is the Proton acceptor of the active site. Positions 285, 317, and 369 each coordinate substrate.

The protein belongs to the RuBisCO large chain family. Type I subfamily. In terms of assembly, heterohexadecamer of 8 large chains and 8 small chains; disulfide-linked. The disulfide link is formed within the large subunit homodimers. Requires Mg(2+) as cofactor. Post-translationally, the disulfide bond which can form in the large chain dimeric partners within the hexadecamer appears to be associated with oxidative stress and protein turnover.

The protein resides in the plastid. Its subcellular location is the chloroplast. It carries out the reaction 2 (2R)-3-phosphoglycerate + 2 H(+) = D-ribulose 1,5-bisphosphate + CO2 + H2O. It catalyses the reaction D-ribulose 1,5-bisphosphate + O2 = 2-phosphoglycolate + (2R)-3-phosphoglycerate + 2 H(+). Functionally, ruBisCO catalyzes two reactions: the carboxylation of D-ribulose 1,5-bisphosphate, the primary event in carbon dioxide fixation, as well as the oxidative fragmentation of the pentose substrate in the photorespiration process. Both reactions occur simultaneously and in competition at the same active site. The polypeptide is Ribulose bisphosphate carboxylase large chain (Cornus canadensis (Bunchberry dogwood)).